The following is a 311-amino-acid chain: Putative dihydroorotate dehydrogenase A (fumarate) (311 aa).

Residues K45, 69 to 73 (NSMGL), and N128 each bind substrate. 45 to 46 (KT) contacts FMN. FMN is bound at residue N128. Residue C131 is the Nucleophile of the active site. The FMN site is built by K165 and V193. 194 to 195 (NS) is a substrate binding site. Residues G220, 248–249 (GG), and 270–271 (GT) contribute to the FMN site.

It belongs to the dihydroorotate dehydrogenase family. Type 1 subfamily. Homodimer. It depends on FMN as a cofactor.

Its subcellular location is the cytoplasm. The enzyme catalyses (S)-dihydroorotate + fumarate = orotate + succinate. It participates in pyrimidine metabolism; UMP biosynthesis via de novo pathway. Catalyzes the conversion of dihydroorotate to orotate with fumarate as the electron acceptor. The protein is Putative dihydroorotate dehydrogenase A (fumarate) (pyrD) of Streptococcus pyogenes serotype M3 (strain SSI-1).